The sequence spans 178 residues: ATP synthase subunit delta (178 aa).

This sequence belongs to the ATPase delta chain family. F-type ATPases have 2 components, F(1) - the catalytic core - and F(0) - the membrane proton channel. F(1) has five subunits: alpha(3), beta(3), gamma(1), delta(1), epsilon(1). F(0) has three main subunits: a(1), b(2) and c(10-14). The alpha and beta chains form an alternating ring which encloses part of the gamma chain. F(1) is attached to F(0) by a central stalk formed by the gamma and epsilon chains, while a peripheral stalk is formed by the delta and b chains.

The protein resides in the cell membrane. In terms of biological role, f(1)F(0) ATP synthase produces ATP from ADP in the presence of a proton or sodium gradient. F-type ATPases consist of two structural domains, F(1) containing the extramembraneous catalytic core and F(0) containing the membrane proton channel, linked together by a central stalk and a peripheral stalk. During catalysis, ATP synthesis in the catalytic domain of F(1) is coupled via a rotary mechanism of the central stalk subunits to proton translocation. Its function is as follows. This protein is part of the stalk that links CF(0) to CF(1). It either transmits conformational changes from CF(0) to CF(1) or is implicated in proton conduction. The polypeptide is ATP synthase subunit delta (Moorella thermoacetica (strain ATCC 39073 / JCM 9320)).